The sequence spans 345 residues: Fibronectin type 3 and ankyrin repeat domains protein 1 (345 aa).

Residues 8 to 108 form the Fibronectin type-III domain; it reads PPSKPHPPVV…LVSVSTTREP (101 aa). ANK repeat units lie at residues 109-139, 143-172, 176-205, 209-238, 243-273, and 277-306; these read ISSE…KVDV, FGFT…DVNL, SGKD…SWQA, GGCT…EVDV, SGWT…NVNV, and NGKT…DASV.

As to quaternary structure, interacts with COPS5; regulates the phosphorylation of JUN and the transcriptional activity of AP-1. Interacts with RYBP; may prevent the ubiquitin-mediated proteasomal degradation of FANK1. Post-translationally, polyubiquitinated. Polyubiquitination leads to proteasomal degradation. In terms of tissue distribution, mostly restricted to testis.

The protein localises to the nucleus. It localises to the cytoplasm. It is found in the cytosol. The protein resides in the cytoskeleton. Its subcellular location is the cilium basal body. The protein localises to the cell projection. It localises to the cilium. Its function is as follows. Through the activation of JUN and AP-1-mediated transcription, may regulate apoptosis. This Homo sapiens (Human) protein is Fibronectin type 3 and ankyrin repeat domains protein 1.